Consider the following 107-residue polypeptide: Anti-adapter protein IraM (107 aa).

It belongs to the IraM/RssC family.

Its subcellular location is the cytoplasm. Functionally, inhibits RpoS proteolysis by regulating RssB activity, thereby increasing the stability of the sigma stress factor RpoS during magnesium starvation. The polypeptide is Anti-adapter protein IraM (Shigella sonnei (strain Ss046)).